The following is a 96-amino-acid chain: MLFQVRMDVHLPVSMPTDQANQIKSVEKAYSQELQRQGKWRHIWRITGQYSNISIFDVESNEELHTILQGLPLYPYMKIEVMALNRHPSSVRDDDS.

Belongs to the muconolactone Delta-isomerase family. In terms of assembly, homodecamer.

It catalyses the reaction (S)-muconolactone = (4,5-dihydro-5-oxofuran-2-yl)-acetate. The protein operates within aromatic compound metabolism; beta-ketoadipate pathway; 5-oxo-4,5-dihydro-2-furylacetate from catechol: step 3/3. In Acinetobacter baylyi (strain ATCC 33305 / BD413 / ADP1), this protein is Muconolactone Delta-isomerase (catC).